Reading from the N-terminus, the 144-residue chain is Large ribosomal subunit protein uL11 (144 aa).

It belongs to the universal ribosomal protein uL11 family. In terms of assembly, part of the ribosomal stalk of the 50S ribosomal subunit. Interacts with L10 and the large rRNA to form the base of the stalk. L10 forms an elongated spine to which L12 dimers bind in a sequential fashion forming a multimeric L10(L12)X complex. One or more lysine residues are methylated.

Functionally, forms part of the ribosomal stalk which helps the ribosome interact with GTP-bound translation factors. The protein is Large ribosomal subunit protein uL11 of Corynebacterium efficiens (strain DSM 44549 / YS-314 / AJ 12310 / JCM 11189 / NBRC 100395).